A 987-amino-acid polypeptide reads, in one-letter code: Vacuolar membrane protease (987 aa).

Topologically, residues 1 to 14 (MATRKARNPLAFMP) are cytoplasmic. A helical transmembrane segment spans residues 15 to 35 (WPVTILTTAMYLALIIPLLVI). At 36-384 (HHNVPPAPRT…AFAVFRLHTL (349 aa)) the chain is on the vacuolar side. Asn-51 and Asn-117 each carry an N-linked (GlcNAc...) asparagine glycan. Zn(2+) contacts are provided by His-167 and Asp-179. Glu-213 serves as the catalytic Proton acceptor. Glu-214, Glu-239, and His-312 together coordinate Zn(2+). Residues 385–405 (FALSVTLLIVAPLTLLVTSVI) traverse the membrane as a helical segment. Topologically, residues 406–435 (LSRADKMYLFRSSVYSEINDDYIPLRGLRG) are cytoplasmic. Residues 436-456 (FFRFPFLISIPTGVTVGLAYM) form a helical membrane-spanning segment. At 457–466 (VTKVNPFIAH) the chain is on the vacuolar side. A helical transmembrane segment spans residues 467–487 (SSSYAVWSMMISAWIFLAWFV). Over 488–501 (SRVANSARPSAFHR) the chain is Cytoplasmic. The helical transmembrane segment at 502 to 522 (VYTWTWMFVLTWSLMVVCTVY) threads the bilayer. Residues 523-526 (EHEE) lie on the Vacuolar side of the membrane. The chain crosses the membrane as a helical span at residues 527–547 (GLAGGYFIFFYFAGTFLATWI). Topologically, residues 548–649 (SYLELFALPT…WSGVLPRWTW (102 aa)) are cytoplasmic. The disordered stretch occupies residues 572–600 (STQGSRLAASGDEHQDDAAEEDPTESTSL). Residues 650–670 (LLQLLITAPVILMLIVPLALL) form a helical membrane-spanning segment. Over 671 to 686 (TTSALSQTGQDGSPQL) the chain is Vacuolar. The chain crosses the membrane as a helical span at residues 687-707 (LIYLFISCLTALLFAPMLPFI). Topologically, residues 708–715 (HRYTYHLP) are cytoplasmic. A helical membrane pass occupies residues 716–736 (IFLLFVFIGTMIYNLVAFPFA). At 737 to 987 (DSNRLKLFFL…KRSSLGALGS (251 aa)) the chain is on the vacuolar side. Residues Asn-781 and Asn-871 are each glycosylated (N-linked (GlcNAc...) asparagine).

This sequence belongs to the peptidase M28 family. The cofactor is Zn(2+).

It is found in the vacuole membrane. In terms of biological role, may be involved in vacuolar sorting and osmoregulation. The protein is Vacuolar membrane protease of Penicillium rubens (strain ATCC 28089 / DSM 1075 / NRRL 1951 / Wisconsin 54-1255) (Penicillium chrysogenum).